Consider the following 83-residue polypeptide: Putative membrane protein insertion efficiency factor (83 aa).

The segment at glycine 63–aspartate 83 is disordered. Basic and acidic residues predominate over residues valine 68–aspartate 83.

It belongs to the UPF0161 family.

The protein resides in the cell membrane. In terms of biological role, could be involved in insertion of integral membrane proteins into the membrane. This is Putative membrane protein insertion efficiency factor from Streptococcus agalactiae serotype III (strain NEM316).